Here is a 283-residue protein sequence, read N- to C-terminus: Pantothenate synthetase (283 aa).

31–38 (MGALHDGH) contributes to the ATP binding site. H38 (proton donor) is an active-site residue. Residue Q62 coordinates (R)-pantoate. Beta-alanine is bound at residue Q62. 148–151 (GKKD) is an ATP binding site. (R)-pantoate is bound at residue Q154. ATP-binding positions include V177 and 185-188 (KSSR).

It belongs to the pantothenate synthetase family. Homodimer.

The protein localises to the cytoplasm. The enzyme catalyses (R)-pantoate + beta-alanine + ATP = (R)-pantothenate + AMP + diphosphate + H(+). Its pathway is cofactor biosynthesis; (R)-pantothenate biosynthesis; (R)-pantothenate from (R)-pantoate and beta-alanine: step 1/1. Catalyzes the condensation of pantoate with beta-alanine in an ATP-dependent reaction via a pantoyl-adenylate intermediate. This Staphylococcus aureus (strain MRSA252) protein is Pantothenate synthetase.